The chain runs to 357 residues: Probable cinnamyl alcohol dehydrogenase 2 (357 aa).

Zn(2+) is bound at residue Cys-47. Ser-49 serves as a coordination point for NADP(+). The Zn(2+) site is built by His-69, Glu-70, Cys-100, Cys-103, Cys-106, Cys-114, and Cys-163. Residues Thr-167, 188-193 (GLGGVG), 211-216 (SSSDKK), Thr-251, Gly-275, and 298-300 (SFI) each bind NADP(+).

Belongs to the zinc-containing alcohol dehydrogenase family. As to quaternary structure, homodimer. Zn(2+) serves as cofactor.

The enzyme catalyses (E)-cinnamyl alcohol + NADP(+) = (E)-cinnamaldehyde + NADPH + H(+). It carries out the reaction (E)-coniferol + NADP(+) = (E)-coniferaldehyde + NADPH + H(+). It catalyses the reaction (E)-sinapyl alcohol + NADP(+) = (E)-sinapaldehyde + NADPH + H(+). The catalysed reaction is (E)-4-coumaroyl alcohol + NADP(+) = (E)-4-coumaraldehyde + NADPH + H(+). The enzyme catalyses (E)-caffeyl alcohol + NADP(+) = (E)-caffeyl aldehyde + NADPH + H(+). The protein operates within aromatic compound metabolism; phenylpropanoid biosynthesis. Its function is as follows. Involved in lignin biosynthesis. Catalyzes the final step specific for the production of lignin monomers. Catalyzes the NADPH-dependent reduction of coniferaldehyde, 5-hydroxyconiferaldehyde, sinapaldehyde, 4-coumaraldehyde and caffeyl aldehyde to their respective alcohols. This Picea abies (Norway spruce) protein is Probable cinnamyl alcohol dehydrogenase 2 (CAD2).